The primary structure comprises 545 residues: CTP synthase (545 aa).

Residues M1–L266 are amidoligase domain. S14 contributes to the CTP binding site. A UTP-binding site is contributed by S14. Residues S15–I20 and D72 each bind ATP. D72 and E140 together coordinate Mg(2+). CTP contacts are provided by residues D147–E149, K187–Q192, and K223. Residues K187–Q192 and K223 each bind UTP. K239–V241 lines the ATP pocket. Residues T291 to R542 enclose the Glutamine amidotransferase type-1 domain. G352 contacts L-glutamine. Residue C379 is the Nucleophile; for glutamine hydrolysis of the active site. L-glutamine is bound by residues L380–Q383, E403, and R470. Active-site residues include H515 and E517.

This sequence belongs to the CTP synthase family. In terms of assembly, homotetramer.

It carries out the reaction UTP + L-glutamine + ATP + H2O = CTP + L-glutamate + ADP + phosphate + 2 H(+). The catalysed reaction is L-glutamine + H2O = L-glutamate + NH4(+). The enzyme catalyses UTP + NH4(+) + ATP = CTP + ADP + phosphate + 2 H(+). The protein operates within pyrimidine metabolism; CTP biosynthesis via de novo pathway; CTP from UDP: step 2/2. Allosterically activated by GTP, when glutamine is the substrate; GTP has no effect on the reaction when ammonia is the substrate. The allosteric effector GTP functions by stabilizing the protein conformation that binds the tetrahedral intermediate(s) formed during glutamine hydrolysis. Inhibited by the product CTP, via allosteric rather than competitive inhibition. Its function is as follows. Catalyzes the ATP-dependent amination of UTP to CTP with either L-glutamine or ammonia as the source of nitrogen. Regulates intracellular CTP levels through interactions with the four ribonucleotide triphosphates. The chain is CTP synthase from Shigella boydii serotype 18 (strain CDC 3083-94 / BS512).